Here is a 298-residue protein sequence, read N- to C-terminus: Probable 2-(5''-triphosphoribosyl)-3'-dephosphocoenzyme-A synthase 2 (298 aa).

The protein belongs to the CitG/MdcB family.

The catalysed reaction is 3'-dephospho-CoA + ATP = 2'-(5''-triphospho-alpha-D-ribosyl)-3'-dephospho-CoA + adenine. The polypeptide is Probable 2-(5''-triphosphoribosyl)-3'-dephosphocoenzyme-A synthase 2 (Salmonella choleraesuis (strain SC-B67)).